The primary structure comprises 282 residues: Pantothenate synthetase (282 aa).

30–37 (MGYLHEGH) serves as a coordination point for ATP. The active-site Proton donor is the histidine 37. Glutamine 61 is a (R)-pantoate binding site. Glutamine 61 is a beta-alanine binding site. Residue 147-150 (GMKD) coordinates ATP. Glutamine 153 is a binding site for (R)-pantoate. ATP-binding positions include valine 176 and 184-187 (KSSR).

This sequence belongs to the pantothenate synthetase family. As to quaternary structure, homodimer.

The protein localises to the cytoplasm. It carries out the reaction (R)-pantoate + beta-alanine + ATP = (R)-pantothenate + AMP + diphosphate + H(+). The protein operates within cofactor biosynthesis; (R)-pantothenate biosynthesis; (R)-pantothenate from (R)-pantoate and beta-alanine: step 1/1. In terms of biological role, catalyzes the condensation of pantoate with beta-alanine in an ATP-dependent reaction via a pantoyl-adenylate intermediate. This Geobacillus sp. (strain WCH70) protein is Pantothenate synthetase.